The sequence spans 537 residues: MKFITVAAALFASTSLAVPTNPNHGGSACVPNPHHGGSSTKSGPGGNPTGGNPTGSNTNTGPGGNPTGSNTSSSPGTRTTGGSTSSNPGPKPTSSNTRSGPATTTTGTKTGSNTSSGPATTSTGNPGPGGEFHCPRGLYSNLQCCATDVLGVVDLDCASPPTTPTSGDNFNAICAAVGKQAKCCVLPVAGQAALCQNPIGGNPPGGNPPGGNPPGGNPPGGNPPGGNPPGGPVCPSGLYSNAQCCATDVLGVADLNCDTPSKTPTSGADFTAICAASGQQAKCCVIPVAGQALLCENPTGGNPPGGNPPGGNPPGGNPPGGNPPGGNPPGGNPPGGNPTSSAPGSNPTNPPGGPVCPPGLYSNAQCCAVDVLGLADLDCDTPSQTPTSSADFRSICAADGQAAKCCVIPVAGQALLCQDPLGGNPPGGNPPGSSNPPGGSNPPGGSNPPGGSNPPGGNPPGGNPPGGNHVCPSGLYSNAQCCDVNVLGVANLNCAPPSTKPTSGKNFESICAAIGKGSMCCVVPLLGQAILCQRAII.

The signal sequence occupies residues Met-1–Ala-17. Hydrophobin stretches follow at residues Gly-63–Ile-199, Gly-200–Thr-299, Gly-300–Leu-421, and Gly-422–Ile-537. N-linked (GlcNAc...) asparagine glycosylation is found at Asn-70 and Asn-113. Cystine bridges form between Cys-134–Cys-183, Cys-144–Cys-174, Cys-145–Cys-157, Cys-184–Cys-195, Cys-234–Cys-283, Cys-244–Cys-274, Cys-245–Cys-257, Cys-284–Cys-295, Cys-356–Cys-405, Cys-366–Cys-396, Cys-367–Cys-379, Cys-406–Cys-417, Cys-471–Cys-520, Cys-481–Cys-511, Cys-482–Cys-494, and Cys-521–Cys-532.

Belongs to the cerato-ulmin hydrophobin family. Homotetramer. Further self-assembles to form highly ordered films at water-air interfaces through intermolecular interactions.

The protein resides in the secreted. The protein localises to the cell wall. Aerial growth, conidiation, and dispersal of filamentous fungi in the environment rely upon a capability of their secreting small amphipathic proteins called hydrophobins (HPBs) with low sequence identity. Class I can self-assemble into an outermost layer of rodlet bundles on aerial cell surfaces, conferring cellular hydrophobicity that supports fungal growth, development and dispersal; whereas Class II form highly ordered films at water-air interfaces through intermolecular interactions but contribute nothing to the rodlet structure. The chain is Quadr-hydrophobin from Cordyceps militaris (Caterpillar fungus).